A 159-amino-acid chain; its full sequence is Cyclic pyranopterin monophosphate synthase (159 aa).

Substrate-binding positions include 75–77 (LCH) and 113–114 (ME). The active site involves Asp-128.

It belongs to the MoaC family. Homohexamer; trimer of dimers.

It carries out the reaction (8S)-3',8-cyclo-7,8-dihydroguanosine 5'-triphosphate = cyclic pyranopterin phosphate + diphosphate. Its pathway is cofactor biosynthesis; molybdopterin biosynthesis. Catalyzes the conversion of (8S)-3',8-cyclo-7,8-dihydroguanosine 5'-triphosphate to cyclic pyranopterin monophosphate (cPMP). The polypeptide is Cyclic pyranopterin monophosphate synthase (Yersinia pseudotuberculosis serotype O:3 (strain YPIII)).